We begin with the raw amino-acid sequence, 28 residues long: leu operon leader peptide (28 aa).

Functionally, involved in control of the biosynthesis of leucine. The polypeptide is leu operon leader peptide (leuL) (Salmonella typhimurium (strain LT2 / SGSC1412 / ATCC 700720)).